Here is a 367-residue protein sequence, read N- to C-terminus: Uroporphyrinogen decarboxylase (367 aa).

At methionine 1 the chain carries N-acetylmethionine. Coproporphyrinogen I contacts are provided by arginine 37, alanine 39, arginine 41, arginine 50, aspartate 86, tyrosine 164, serine 219, and histidine 339. Arginine 37, alanine 39, and arginine 41 together coordinate coproporphyrinogen III. The coproporphyrinogen III site is built by aspartate 86, tyrosine 164, serine 219, and histidine 339.

It belongs to the uroporphyrinogen decarboxylase family. As to quaternary structure, homodimer.

It localises to the cytoplasm. The protein resides in the cytosol. It carries out the reaction uroporphyrinogen III + 4 H(+) = coproporphyrinogen III + 4 CO2. The enzyme catalyses uroporphyrinogen I + 4 H(+) = coproporphyrinogen I + 4 CO2. The protein operates within porphyrin-containing compound metabolism; protoporphyrin-IX biosynthesis; coproporphyrinogen-III from 5-aminolevulinate: step 4/4. Its function is as follows. Catalyzes the sequential decarboxylation of the four acetate side chains of uroporphyrinogen to form coproporphyrinogen and participates in the fifth step in the heme biosynthetic pathway. Isomer I or isomer III of uroporphyrinogen may serve as substrate, but only coproporphyrinogen III can ultimately be converted to heme. In vitro also decarboxylates pentacarboxylate porphyrinogen I. The chain is Uroporphyrinogen decarboxylase from Mus musculus (Mouse).